A 196-amino-acid chain; its full sequence is Nucleoside triphosphate pyrophosphatase (196 aa).

The active-site Proton acceptor is D73.

Belongs to the Maf family. The cofactor is a divalent metal cation.

The protein resides in the cytoplasm. It carries out the reaction a ribonucleoside 5'-triphosphate + H2O = a ribonucleoside 5'-phosphate + diphosphate + H(+). It catalyses the reaction a 2'-deoxyribonucleoside 5'-triphosphate + H2O = a 2'-deoxyribonucleoside 5'-phosphate + diphosphate + H(+). Functionally, nucleoside triphosphate pyrophosphatase. May have a dual role in cell division arrest and in preventing the incorporation of modified nucleotides into cellular nucleic acids. The sequence is that of Nucleoside triphosphate pyrophosphatase from Chlamydia pneumoniae (Chlamydophila pneumoniae).